The following is a 184-amino-acid chain: C-phycoerythrin class 1 subunit beta (184 aa).

Cysteine 50 and cysteine 61 together coordinate (2R,3E)-phycoerythrobilin. The residue at position 72 (asparagine 72) is an N4-methylasparagine. (2R,3E)-phycoerythrobilin-binding residues include cysteine 82 and cysteine 165.

Belongs to the phycobiliprotein family. As to quaternary structure, heterodimer of an alpha and a beta chain. Contains three covalently linked phycoerythrobilin chromophores.

It is found in the cellular thylakoid membrane. Functionally, light-harvesting photosynthetic bile pigment-protein from the phycobiliprotein complex. The polypeptide is C-phycoerythrin class 1 subunit beta (cpeB) (Synechococcus sp. (strain WH8020)).